The primary structure comprises 400 residues: MKAIIIIAGSEFVQGRKQDKNGLFIAKNLFERGVDVQGIIISPDSHYELLNYIKFALDRADLVFISGGLGPTTDDNTRMAVSEAIGVPLIYNEEWLNKLKTYYKSNNVEITEERKSMAKIPYGSAIIENPVGRAVGFIKVLDDIKKAVVALPGVPSEMEPMFYKALEMLNINEKKRYTKLFRVFGIKELDLNYLLNDMKDLSYNFSPKGIDVFLYDTTLESFKEKEKKIKDRLGTFIYAEDNLEMEEVVGKLLRENKKTVATAESSTGGLIVSRLVNVPGSSGYVLGGIVSYVNEVKINLLKVNEEDIKNFGAVSEPVAKQMVEGVRNLINSDLAVSDTGIAGPTGESPNKPLGLHYIGFTDGKETKVYKEIYQGSRNDVRLYISQFALNLIRLYLISNS.

This sequence belongs to the CinA family.

The protein is CinA-like protein of Sulfurihydrogenibium sp. (strain YO3AOP1).